Consider the following 131-residue polypeptide: Methylglyoxal synthase (131 aa).

Residues 1-131 (MKIALIAHDK…GDLDYRKLRK (131 aa)) form the MGS-like domain. Residues His8, Lys12, 34 to 37 (TGTT), and 54 to 55 (SG) contribute to the substrate site. Asp60 functions as the Proton donor/acceptor in the catalytic mechanism. His87 lines the substrate pocket.

It belongs to the methylglyoxal synthase family.

It carries out the reaction dihydroxyacetone phosphate = methylglyoxal + phosphate. In terms of biological role, catalyzes the formation of methylglyoxal from dihydroxyacetone phosphate. The polypeptide is Methylglyoxal synthase (Bacillus cereus (strain ATCC 10987 / NRS 248)).